The sequence spans 137 residues: Basic phospholipase A2 homolog W6D49 (137 aa).

Residues 1–16 form the signal peptide; that stretch reads MRTLWILAVLLVSVDG. Intrachain disulfides connect cysteine 42–cysteine 131, cysteine 44–cysteine 60, cysteine 59–cysteine 111, cysteine 65–cysteine 137, cysteine 66–cysteine 104, cysteine 73–cysteine 97, and cysteine 91–cysteine 102. Residues 121–133 form an important for membrane-damaging activities in eukaryotes and bacteria; heparin-binding region; sequence KKQQFNTGIFCSK.

In terms of assembly, monomer. In terms of tissue distribution, expressed by the venom gland.

The protein localises to the secreted. Its activity is regulated as follows. Heparin reduces its edema-inducing activity. In terms of biological role, snake venom phospholipase A2 homolog that lacks enzymatic activity. Shows myotoxin activities and displays edema-inducing activities. A model of myotoxic mechanism has been proposed: an apo Lys49-PLA2 is activated by the entrance of a hydrophobic molecule (e.g. fatty acid) at the hydrophobic channel of the protein leading to a reorientation of a monomer. This reorientation causes a transition between 'inactive' to 'active' states, causing alignment of C-terminal and membrane-docking sites (MDoS) side-by-side and putting the membrane-disruption sites (MDiS) in the same plane, exposed to solvent and in a symmetric position for both monomers. The MDoS region stabilizes the toxin on membrane by the interaction of charged residues with phospholipid head groups. Subsequently, the MDiS region destabilizes the membrane with penetration of hydrophobic residues. This insertion causes a disorganization of the membrane, allowing an uncontrolled influx of ions (i.e. calcium and sodium), and eventually triggering irreversible intracellular alterations and cell death. In Calloselasma rhodostoma (Malayan pit viper), this protein is Basic phospholipase A2 homolog W6D49.